We begin with the raw amino-acid sequence, 312 residues long: Malate dehydrogenase 1 (312 aa).

NAD(+)-binding positions include 11-16 (GAGQIG) and aspartate 35. The substrate site is built by arginine 86 and arginine 92. Residues asparagine 99 and 122-124 (ITN) each bind NAD(+). Residues asparagine 124 and arginine 155 each contribute to the substrate site. Histidine 179 functions as the Proton acceptor in the catalytic mechanism.

The protein belongs to the LDH/MDH superfamily. MDH type 3 family.

It catalyses the reaction (S)-malate + NAD(+) = oxaloacetate + NADH + H(+). In terms of biological role, catalyzes the reversible oxidation of malate to oxaloacetate. The polypeptide is Malate dehydrogenase 1 (Anaeromyxobacter dehalogenans (strain 2CP-C)).